The following is a 199-amino-acid chain: Chaperone protein TorD (199 aa).

The protein belongs to the TorD/DmsD family. TorD subfamily.

The protein localises to the cytoplasm. Its function is as follows. Involved in the biogenesis of TorA. Acts on TorA before the insertion of the molybdenum cofactor and, as a result, probably favors a conformation of the apoenzyme that is competent for acquiring the cofactor. The polypeptide is Chaperone protein TorD (Actinobacillus pleuropneumoniae serotype 7 (strain AP76)).